A 460-amino-acid polypeptide reads, in one-letter code: Phosphomethylpyrimidine synthase (460 aa).

Substrate-binding positions include N80, M109, Y139, H175, 195 to 197, 236 to 239, and E275; these read SRG and DSLR. H279 is a Zn(2+) binding site. Substrate is bound at residue Y302. H343 contacts Zn(2+). Residues C423, C426, and C431 each contribute to the [4Fe-4S] cluster site.

Belongs to the ThiC family. [4Fe-4S] cluster serves as cofactor.

It carries out the reaction 5-amino-1-(5-phospho-beta-D-ribosyl)imidazole + S-adenosyl-L-methionine = 4-amino-2-methyl-5-(phosphooxymethyl)pyrimidine + CO + 5'-deoxyadenosine + formate + L-methionine + 3 H(+). It functions in the pathway cofactor biosynthesis; thiamine diphosphate biosynthesis. Catalyzes the synthesis of the hydroxymethylpyrimidine phosphate (HMP-P) moiety of thiamine from aminoimidazole ribotide (AIR) in a radical S-adenosyl-L-methionine (SAM)-dependent reaction. The polypeptide is Phosphomethylpyrimidine synthase (Rippkaea orientalis (strain PCC 8801 / RF-1) (Cyanothece sp. (strain PCC 8801))).